Reading from the N-terminus, the 569-residue chain is Proline--tRNA ligase (569 aa).

The protein belongs to the class-II aminoacyl-tRNA synthetase family. ProS type 1 subfamily. Homodimer.

It localises to the cytoplasm. The enzyme catalyses tRNA(Pro) + L-proline + ATP = L-prolyl-tRNA(Pro) + AMP + diphosphate. In terms of biological role, catalyzes the attachment of proline to tRNA(Pro) in a two-step reaction: proline is first activated by ATP to form Pro-AMP and then transferred to the acceptor end of tRNA(Pro). As ProRS can inadvertently accommodate and process non-cognate amino acids such as alanine and cysteine, to avoid such errors it has two additional distinct editing activities against alanine. One activity is designated as 'pretransfer' editing and involves the tRNA(Pro)-independent hydrolysis of activated Ala-AMP. The other activity is designated 'posttransfer' editing and involves deacylation of mischarged Ala-tRNA(Pro). The misacylated Cys-tRNA(Pro) is not edited by ProRS. The protein is Proline--tRNA ligase of Legionella pneumophila (strain Corby).